The primary structure comprises 216 residues: Ribosomal RNA small subunit methyltransferase G (216 aa).

S-adenosyl-L-methionine-binding positions include Gly83, Met88, 134–135 (VE), and Arg149.

Belongs to the methyltransferase superfamily. RNA methyltransferase RsmG family.

Its subcellular location is the cytoplasm. It catalyses the reaction guanosine(527) in 16S rRNA + S-adenosyl-L-methionine = N(7)-methylguanosine(527) in 16S rRNA + S-adenosyl-L-homocysteine. Specifically methylates the N7 position of guanine in position 527 of 16S rRNA. This Pseudomonas putida (strain GB-1) protein is Ribosomal RNA small subunit methyltransferase G.